A 166-amino-acid chain; its full sequence is Mitochondrial fission process protein 1 (166 aa).

3 helical membrane passes run 33-53 (SLVK…YVAA), 78-98 (AIAA…IPGF), and 125-145 (TVTC…DSFV).

It belongs to the MTFP1 family.

It is found in the mitochondrion inner membrane. Its function is as follows. Involved in the mitochondrial division probably by regulating membrane fission. Loss-of-function leads to apoptosis. This is Mitochondrial fission process protein 1 (mtp-18) from Caenorhabditis elegans.